We begin with the raw amino-acid sequence, 409 residues long: tRNA (guanine-N(7)-)-methyltransferase non-catalytic subunit wuho (409 aa).

The tract at residues 48 to 72 (DADSDSDEESTQQPQKPPTNGNGTA) is disordered. Positions 58 to 72 (TQQPQKPPTNGNGTA) are enriched in polar residues. WD repeat units follow at residues 72–111 (ADNV…DETN), 122–161 (MVSR…CKKP), 167–206 (GHMS…SIET), and 210–252 (GHGE…EVAR).

Belongs to the WD repeat TRM82 family. Forms a heterodimer with the catalytic subunit.

It is found in the nucleus. Its pathway is tRNA modification; N(7)-methylguanine-tRNA biosynthesis. In terms of biological role, required for the formation of N(7)-methylguanine at position 46 (m7G46) in tRNA. In the complex, it is required to stabilize and induce conformational changes of the catalytic subunit. The sequence is that of tRNA (guanine-N(7)-)-methyltransferase non-catalytic subunit wuho from Aedes aegypti (Yellowfever mosquito).